We begin with the raw amino-acid sequence, 480 residues long: MELKALFNLDPNVKVRTRFAPSPTGYLHVGGARTALYSWLYAKHNDGEFVLRIEDTDLERSTPEATAAILDAMEWLNLTWEHGPYFQTERFDRYNEVIDQMIEQGLAYRCYCSKERLEELRHQQEANKEKPRYDRHCLHDHEHSPYEPHVVRFKNPQEGSVVFEDAVRGRIEISNHELDDLIIRRSDGSPTYNFCVVVDDWDMGITHVVRGEDHINNTPRQINILKALGAPIPVYAHVSMINGDDGQKLSKRHGAVSVMQYRDEGYLPEALLNYLVRLGWGHGDQEIFTLEEMIKLFELEHVSKSASAFNTEKLLWLNQHYIRELPAEYVAQHLAWQYQEQGIDTSKGPALTEIVSMLGERCKTLKEMAASSRYFFEEFDGFDEAAAKKHLKAAAVEPLEKVKEKLTALSGWDAHSAHEAIEQTAAELEVGMGKVGMPLRVAVTGAGQSPSMDVTLAGIGRERVLARIQKAIDFIKAKNA.

Residues 21-31 carry the 'HIGH' region motif; it reads PSPTGYLHVGG. Positions 110, 112, 137, and 139 each coordinate Zn(2+). Positions 248-252 match the 'KMSKS' region motif; it reads KLSKR. K251 serves as a coordination point for ATP.

It belongs to the class-I aminoacyl-tRNA synthetase family. Glutamate--tRNA ligase type 1 subfamily. Monomer. Requires Zn(2+) as cofactor.

It localises to the cytoplasm. It catalyses the reaction tRNA(Glu) + L-glutamate + ATP = L-glutamyl-tRNA(Glu) + AMP + diphosphate. Its function is as follows. Catalyzes the attachment of glutamate to tRNA(Glu) in a two-step reaction: glutamate is first activated by ATP to form Glu-AMP and then transferred to the acceptor end of tRNA(Glu). This is Glutamate--tRNA ligase from Mannheimia succiniciproducens (strain KCTC 0769BP / MBEL55E).